The chain runs to 540 residues: MNNLTSTKFIFVTGGVVSSLGKGLAAASIGALLQARGFKICLRKLDPYLNIDPGTMSPIQHGEVFVTDDGAETDLDLGHYERFTGVKTTKNDNITTGKVYHNLLSKERKGDYLGQTVQIIPHVTDLINSFILYNTDALDFVICEIGGTVGDIESQPFLESIRQIGYKLSKNNTVFVHLTLVPYISATMELKTKPTQHSVKELSSVGIQPDIILYRSKIPLSQEQRDKIANLCNVSPTNIIPALDVKNIYELPISYHQYNLDTQILKHFNITSPEPNLDKWENILNISHISTKTITIAIIGKYIKLLDAYKSLIEALEHAAIHNKTKLSIHWIDSRSLNNEITNTFDNVHAILIPGGFGDDGVEGKIIAIKYARINNIPFLGICMGMQLAIIEFVRNVIHLEDANSTEFNFYCKNPVIHQLPELQQNLGGSMKLGSHPCYLKVDSKIFSIYKEQVINERRRHRYTVNLQYKDLLESHGLIFTGHSHHNNNDSLAEVIELKNHPWFIGVQFHPEFKSDPFQSHPLFMSFVQASLNYQETKKA.

The segment at 1–270 is amidoligase domain; that stretch reads MNNLTSTKFI…DTQILKHFNI (270 aa). Ser-18 provides a ligand contact to CTP. Residue Ser-18 coordinates UTP. ATP contacts are provided by residues 19 to 24 and Asp-76; that span reads SLGKGL. Residues Asp-76 and Glu-144 each coordinate Mg(2+). Residues 151 to 153, 191 to 196, and Lys-227 each bind CTP; these read DIE and KTKPTQ. UTP contacts are provided by residues 191-196 and Lys-227; that span reads KTKPTQ. In terms of domain architecture, Glutamine amidotransferase type-1 spans 295 to 537; the sequence is TIAIIGKYIK…VQASLNYQET (243 aa). Gly-356 contributes to the L-glutamine binding site. Residue Cys-383 is the Nucleophile; for glutamine hydrolysis of the active site. L-glutamine-binding positions include 384 to 387, Glu-407, and Arg-462; that span reads MGMQ. Residues His-510 and Glu-512 contribute to the active site.

This sequence belongs to the CTP synthase family. As to quaternary structure, homotetramer.

It carries out the reaction UTP + L-glutamine + ATP + H2O = CTP + L-glutamate + ADP + phosphate + 2 H(+). The enzyme catalyses L-glutamine + H2O = L-glutamate + NH4(+). The catalysed reaction is UTP + NH4(+) + ATP = CTP + ADP + phosphate + 2 H(+). Its pathway is pyrimidine metabolism; CTP biosynthesis via de novo pathway; CTP from UDP: step 2/2. With respect to regulation, allosterically activated by GTP, when glutamine is the substrate; GTP has no effect on the reaction when ammonia is the substrate. The allosteric effector GTP functions by stabilizing the protein conformation that binds the tetrahedral intermediate(s) formed during glutamine hydrolysis. Inhibited by the product CTP, via allosteric rather than competitive inhibition. In terms of biological role, catalyzes the ATP-dependent amination of UTP to CTP with either L-glutamine or ammonia as the source of nitrogen. Regulates intracellular CTP levels through interactions with the four ribonucleotide triphosphates. This Ehrlichia ruminantium (strain Welgevonden) protein is CTP synthase.